A 241-amino-acid polypeptide reads, in one-letter code: MPGNHWYDILKKIACEGSSDIDELKGIFEKELSKRKFDSIRNIEDLIDVLERADMLSLHNVEPLRKMSSHKPKLIEALDRYGTPVSAPREPVNIYQEERLAEELRQHLRISQAFQILSAPGVAPPAFIPAAAPTPPPPQQNYITPAAFTDRKRTAVFNKISEELGRFWRIFGRKAGIGEGTMDDIEERYPRDLKSRILHLLKLIEEDDCHDPRQLLMRLCRALTECGRNDIKRKVEQIMSH.

A death-inducing region spans residues 1 to 101; the sequence is MPGNHWYDIL…VNIYQEERLA (101 aa). The 87-residue stretch at 151-237 folds into the Death domain; it reads RKRTAVFNKI…RNDIKRKVEQ (87 aa).

In terms of assembly, N-terminus interacts with Dredd. Interacts with imd.

It localises to the cytoplasm. Functionally, component of the IMD signaling pathway and is required for the host defense against Gram-negative bacteria. Interacts with Dredd, promotes cleavage of Dredd and is necessary and sufficient for enhancing Dredd-induced apoptosis. This chain is Fas-associated death domain protein (Fadd), found in Drosophila pseudoobscura pseudoobscura (Fruit fly).